Reading from the N-terminus, the 353-residue chain is Major outer membrane protein (353 aa).

An N-terminal signal peptide occupies residues 1–20; the sequence is MKKTIVALAVAAVAATSANA.

In terms of assembly, disulfide bond interactions within and between MOMP molecules and other components form high molecular-weight oligomers.

The protein resides in the cell outer membrane. Its function is as follows. Structural rigidity of the outer membrane of elementary bodies and porin forming, permitting diffusion of solutes through the intracellular reticulate body membrane. This chain is Major outer membrane protein (ompH), found in Pasteurella multocida.